The primary structure comprises 368 residues: 4-hydroxy-3-methylbut-2-en-1-yl diphosphate synthase (flavodoxin) (368 aa).

The [4Fe-4S] cluster site is built by cysteine 271, cysteine 274, cysteine 306, and glutamate 313.

Belongs to the IspG family. [4Fe-4S] cluster serves as cofactor.

It catalyses the reaction (2E)-4-hydroxy-3-methylbut-2-enyl diphosphate + oxidized [flavodoxin] + H2O + 2 H(+) = 2-C-methyl-D-erythritol 2,4-cyclic diphosphate + reduced [flavodoxin]. The protein operates within isoprenoid biosynthesis; isopentenyl diphosphate biosynthesis via DXP pathway; isopentenyl diphosphate from 1-deoxy-D-xylulose 5-phosphate: step 5/6. In terms of biological role, converts 2C-methyl-D-erythritol 2,4-cyclodiphosphate (ME-2,4cPP) into 1-hydroxy-2-methyl-2-(E)-butenyl 4-diphosphate. This chain is 4-hydroxy-3-methylbut-2-en-1-yl diphosphate synthase (flavodoxin), found in Haemophilus influenzae (strain 86-028NP).